Reading from the N-terminus, the 694-residue chain is Acetyl-coenzyme A synthetase (694 aa).

A disordered region spans residues 1-23; that stretch reads MSDKRPRSPCSNNNDELNDSSVL. The segment covering 9 to 23 has biased composition (polar residues); that stretch reads PCSNNNDELNDSSVL. CoA-binding positions include 229–232 and threonine 347; that span reads RGKK. Residues 423–425, 447–452, aspartate 536, and arginine 551 contribute to the ATP site; these read GEP and DTYWQT. Residue serine 559 participates in CoA binding. Arginine 562 serves as a coordination point for ATP. Arginine 628 is a binding site for CoA.

This sequence belongs to the ATP-dependent AMP-binding enzyme family.

The enzyme catalyses acetate + ATP + CoA = acetyl-CoA + AMP + diphosphate. This Cryptosporidium parvum protein is Acetyl-coenzyme A synthetase (ACS).